The primary structure comprises 361 residues: Alanine racemase (361 aa).

The Proton acceptor; specific for D-alanine role is filled by K35. N6-(pyridoxal phosphate)lysine is present on K35. Residue R130 coordinates substrate. Y257 functions as the Proton acceptor; specific for L-alanine in the catalytic mechanism. M305 lines the substrate pocket.

The protein belongs to the alanine racemase family. Requires pyridoxal 5'-phosphate as cofactor.

It carries out the reaction L-alanine = D-alanine. The protein operates within amino-acid biosynthesis; D-alanine biosynthesis; D-alanine from L-alanine: step 1/1. Its function is as follows. Catalyzes the interconversion of L-alanine and D-alanine. May also act on other amino acids. This Nitrosomonas eutropha (strain DSM 101675 / C91 / Nm57) protein is Alanine racemase (alr).